The primary structure comprises 294 residues: Phosphatidylserine decarboxylase proenzyme (294 aa).

Active-site charge relay system; for autoendoproteolytic cleavage activity residues include Asp-100, His-157, and Ser-261. Residue Ser-261 is the Schiff-base intermediate with substrate; via pyruvic acid; for decarboxylase activity of the active site. The residue at position 261 (Ser-261) is a Pyruvic acid (Ser); by autocatalysis.

This sequence belongs to the phosphatidylserine decarboxylase family. PSD-B subfamily. Prokaryotic type I sub-subfamily. As to quaternary structure, heterodimer of a large membrane-associated beta subunit and a small pyruvoyl-containing alpha subunit. Pyruvate serves as cofactor. Is synthesized initially as an inactive proenzyme. Formation of the active enzyme involves a self-maturation process in which the active site pyruvoyl group is generated from an internal serine residue via an autocatalytic post-translational modification. Two non-identical subunits are generated from the proenzyme in this reaction, and the pyruvate is formed at the N-terminus of the alpha chain, which is derived from the carboxyl end of the proenzyme. The autoendoproteolytic cleavage occurs by a canonical serine protease mechanism, in which the side chain hydroxyl group of the serine supplies its oxygen atom to form the C-terminus of the beta chain, while the remainder of the serine residue undergoes an oxidative deamination to produce ammonia and the pyruvoyl prosthetic group on the alpha chain. During this reaction, the Ser that is part of the protease active site of the proenzyme becomes the pyruvoyl prosthetic group, which constitutes an essential element of the active site of the mature decarboxylase.

Its subcellular location is the cell membrane. The enzyme catalyses a 1,2-diacyl-sn-glycero-3-phospho-L-serine + H(+) = a 1,2-diacyl-sn-glycero-3-phosphoethanolamine + CO2. It participates in phospholipid metabolism; phosphatidylethanolamine biosynthesis; phosphatidylethanolamine from CDP-diacylglycerol: step 2/2. Functionally, catalyzes the formation of phosphatidylethanolamine (PtdEtn) from phosphatidylserine (PtdSer). The polypeptide is Phosphatidylserine decarboxylase proenzyme (Histophilus somni (strain 129Pt) (Haemophilus somnus)).